The following is a 347-amino-acid chain: Chlorophyllase type 0 (347 aa).

A signal peptide spans Met1 to Ala19. Positions Gln20–Asn30 are excised as a propeptide. The GXSXG motif lies at Gly160–Gly164. Ser162 (nucleophile) is an active-site residue. Asp191 (charge relay system) is an active-site residue. N-linked (GlcNAc...) asparagine glycans are attached at residues Asn215, Asn229, and Asn251. His262 (charge relay system) is an active-site residue. Asn321 is a glycosylation site (N-linked (GlcNAc...) asparagine).

It belongs to the AB hydrolase superfamily. Lipase family.

The catalysed reaction is a chlorophyll + H2O = a chlorophyllide + phytol + H(+). It carries out the reaction chlorophyll a + H2O = phytol + chlorophyllide a + H(+). It participates in porphyrin-containing compound metabolism; chlorophyll degradation. Inhibited by diisopropyl fluorophosphate (DFP), phenylmethanesulfonyl fluoride (PMSF) or p-chloromercuribenzoic acid (PCMB), but not by N-ethylmaleimide (NEM) or iodoacetamide. Its function is as follows. Catalyzes the hydrolysis of ester bond in chlorophyll to yield chlorophyllide and phytol. In Chenopodium album (Fat hen), this protein is Chlorophyllase type 0.